A 123-amino-acid chain; its full sequence is Small ribosomal subunit protein uS12 (123 aa).

A 3-methylthioaspartic acid modification is found at D89.

Belongs to the universal ribosomal protein uS12 family. In terms of assembly, part of the 30S ribosomal subunit. Contacts proteins S8 and S17. May interact with IF1 in the 30S initiation complex.

In terms of biological role, with S4 and S5 plays an important role in translational accuracy. Interacts with and stabilizes bases of the 16S rRNA that are involved in tRNA selection in the A site and with the mRNA backbone. Located at the interface of the 30S and 50S subunits, it traverses the body of the 30S subunit contacting proteins on the other side and probably holding the rRNA structure together. The combined cluster of proteins S8, S12 and S17 appears to hold together the shoulder and platform of the 30S subunit. The sequence is that of Small ribosomal subunit protein uS12 from Sinorhizobium medicae (strain WSM419) (Ensifer medicae).